A 181-amino-acid polypeptide reads, in one-letter code: Large ribosomal subunit protein uL5 (181 aa).

It belongs to the universal ribosomal protein uL5 family. In terms of assembly, part of the 50S ribosomal subunit; part of the 5S rRNA/L5/L18/L25 subcomplex. Contacts the 5S rRNA and the P site tRNA. Forms a bridge to the 30S subunit in the 70S ribosome.

This is one of the proteins that bind and probably mediate the attachment of the 5S RNA into the large ribosomal subunit, where it forms part of the central protuberance. In the 70S ribosome it contacts protein S13 of the 30S subunit (bridge B1b), connecting the 2 subunits; this bridge is implicated in subunit movement. Contacts the P site tRNA; the 5S rRNA and some of its associated proteins might help stabilize positioning of ribosome-bound tRNAs. This Thermosipho africanus (strain TCF52B) protein is Large ribosomal subunit protein uL5.